The chain runs to 674 residues: RNA polymerase sigma factor RpoD (674 aa).

The interval 214 to 252 (AEGAAPAARRPASDEPEYDADGNPISRIDEEEDDDDSSN) is disordered. The tract at residues 440 to 510 (MVEANLRLVI…TRSIADQART (71 aa)) is sigma-70 factor domain-2. The Interaction with polymerase core subunit RpoC signature appears at 464 to 467 (DLIQ). The tract at residues 519-595 (ETINKLVRTG…DKNAILPLDS (77 aa)) is sigma-70 factor domain-3. Residues 608-661 (VLASLTPREERVLRMRFGIGMNTDHTLEEVGQQFSVTRERIRQIEAKALRKLKH) form a sigma-70 factor domain-4 region. The H-T-H motif DNA-binding region spans 634–653 (LEEVGQQFSVTRERIRQIEA).

Belongs to the sigma-70 factor family. RpoD/SigA subfamily. Interacts transiently with the RNA polymerase catalytic core.

The protein localises to the cytoplasm. Its function is as follows. Sigma factors are initiation factors that promote the attachment of RNA polymerase to specific initiation sites and are then released. This sigma factor is the primary sigma factor during exponential growth. The polypeptide is RNA polymerase sigma factor RpoD (Rhodobacter capsulatus (strain ATCC BAA-309 / NBRC 16581 / SB1003)).